The chain runs to 58 residues: UPF0391 membrane protein MADE_1011595 (58 aa).

Helical transmembrane passes span 4–24 and 27–47; these read WAIT…GGIA and ATGI…ISLI.

The protein belongs to the UPF0391 family.

The protein localises to the cell membrane. The polypeptide is UPF0391 membrane protein MADE_1011595 (Alteromonas mediterranea (strain DSM 17117 / CIP 110805 / LMG 28347 / Deep ecotype)).